We begin with the raw amino-acid sequence, 100 residues long: Carboxysome shell vertex protein CcmL (100 aa).

In terms of domain architecture, BMV spans 1–83 (MQLAKVLGTV…LDAMVVGIID (83 aa)).

The protein belongs to the CcmL/EutN family. CcmL subfamily. Homopentamer. Interacts with full-length CcmM.

The protein resides in the carboxysome. In terms of biological role, probably forms vertices in the carboxysome, a polyhedral inclusion where RuBisCO (ribulose bisphosphate carboxylase, rbcL-rbcS) is sequestered. Has been modeled to induce curvature upon insertion into an otherwise flat hexagonal molecular layer of CcmK subunits. The sequence is that of Carboxysome shell vertex protein CcmL from Synechocystis sp. (strain ATCC 27184 / PCC 6803 / Kazusa).